The sequence spans 252 residues: Ribosomal RNA small subunit methyltransferase NEP1 (252 aa).

S-adenosyl-L-methionine is bound by residues Leu180, Gly207, 212–214 (GKD), and 227–232 (LSNYPL).

It belongs to the class IV-like SAM-binding methyltransferase superfamily. RNA methyltransferase NEP1 family. Homodimer. Interacts with snoRNA U3. Interacts with NOP14 and MPP10. Component of the ribosomal small subunit (SSU) processome composed of at least 40 protein subunits and snoRNA U3.

It localises to the nucleus. The protein resides in the nucleolus. It carries out the reaction pseudouridine(1191) in yeast 18S rRNA + S-adenosyl-L-methionine = N(1)-methylpseudouridine(1191) in yeast 18S rRNA + S-adenosyl-L-homocysteine + H(+). Its function is as follows. S-adenosyl-L-methionine-dependent pseudouridine N(1)-methyltransferase that methylates pseudouridine at position 1189 (Psi1189) in 18S rRNA. Involved the biosynthesis of the hypermodified N1-methyl-N3-(3-amino-3-carboxypropyl) pseudouridine (m1acp3-Psi) conserved in eukaryotic 18S rRNA. N1-methylation is independent on acp-modification at the N3-position of U1191. Also has an essential role in 40S ribosomal subunit biogenesis independent on its methyltransferase activity, facilitating the incorporation of ribosomal protein S19 (RPS19A/RPS19B) during the formation of pre-ribosomes. The sequence is that of Ribosomal RNA small subunit methyltransferase NEP1 from Saccharomyces cerevisiae (strain ATCC 204508 / S288c) (Baker's yeast).